The primary structure comprises 244 residues: HTH-type transcriptional regulator RdgA (244 aa).

The HTH cro/C1-type domain occupies 9–62; sequence LKTARTAQGLSQKALGDMIGVSQAAIQKIEVGKASQTTKIVELSNNLRVRPEWL. The H-T-H motif DNA-binding region spans 20 to 39; sequence QKALGDMIGVSQAAIQKIEV.

In terms of biological role, regulates pectin lyase production in response to DNA damage. This Pectobacterium carotovorum subsp. carotovorum (Erwinia carotovora subsp. carotovora) protein is HTH-type transcriptional regulator RdgA (rdgA).